Reading from the N-terminus, the 37-residue chain is Albumin-2 (37 aa).

One copy of the Hemopexin repeat lies at 6–37; that stretch reads IANFSVLNXEAYLFINDKYVLLDYAPGTXNDK.

Dimer. As to expression, expressed in seeds (at protein level).

The protein resides in the cytoplasm. The protein localises to the cytosol. Functionally, binds hemin and thiamine. In Lens culinaris (Lentil), this protein is Albumin-2.